The sequence spans 130 residues: Ribonuclease P protein component (130 aa).

It belongs to the RnpA family. Consists of a catalytic RNA component (M1 or rnpB) and a protein subunit.

The catalysed reaction is Endonucleolytic cleavage of RNA, removing 5'-extranucleotides from tRNA precursor.. In terms of biological role, RNaseP catalyzes the removal of the 5'-leader sequence from pre-tRNA to produce the mature 5'-terminus. It can also cleave other RNA substrates such as 4.5S RNA. The protein component plays an auxiliary but essential role in vivo by binding to the 5'-leader sequence and broadening the substrate specificity of the ribozyme. The polypeptide is Ribonuclease P protein component (Azotobacter vinelandii (strain DJ / ATCC BAA-1303)).